The chain runs to 533 residues: Invertase (533 aa).

The N-terminal stretch at 1–22 (MVQVLSVLVIPLLTLFFGYVAS) is a signal peptide. Residues 47–50 (WMND) and Gln-68 contribute to the substrate site. Residue Asp-50 is part of the active site. A glycan (N-linked (GlcNAc...) asparagine) is linked at Asn-72. Residue 110 to 111 (FS) coordinates substrate. 3 N-linked (GlcNAc...) asparagine glycosylation sites follow: Asn-119, Asn-120, and Asn-126. 178–179 (RD) is a binding site for substrate. Asn-219 carries an N-linked (GlcNAc...) asparagine glycan. Trp-314 contributes to the substrate binding site. Asn-334, Asn-392, and Asn-419 each carry an N-linked (GlcNAc...) asparagine glycan.

It belongs to the glycosyl hydrolase 32 family.

The enzyme catalyses Hydrolysis of terminal non-reducing beta-D-fructofuranoside residues in beta-D-fructofuranosides.. This is Invertase (INV) from Schwanniomyces occidentalis (Yeast).